The following is a 468-amino-acid chain: Phosphomethylpyrimidine synthase (468 aa).

Residues Asn-82, Met-111, Tyr-141, His-177, 197 to 199, 238 to 241, and Glu-277 each bind substrate; these read SRG and DSLR. His-281 is a binding site for Zn(2+). Substrate is bound at residue Tyr-304. His-345 contacts Zn(2+). Residues Cys-425, Cys-428, and Cys-433 each coordinate [4Fe-4S] cluster.

It belongs to the ThiC family. [4Fe-4S] cluster is required as a cofactor.

It catalyses the reaction 5-amino-1-(5-phospho-beta-D-ribosyl)imidazole + S-adenosyl-L-methionine = 4-amino-2-methyl-5-(phosphooxymethyl)pyrimidine + CO + 5'-deoxyadenosine + formate + L-methionine + 3 H(+). It participates in cofactor biosynthesis; thiamine diphosphate biosynthesis. Catalyzes the synthesis of the hydroxymethylpyrimidine phosphate (HMP-P) moiety of thiamine from aminoimidazole ribotide (AIR) in a radical S-adenosyl-L-methionine (SAM)-dependent reaction. The protein is Phosphomethylpyrimidine synthase of Prochlorococcus marinus (strain SARG / CCMP1375 / SS120).